The chain runs to 188 residues: GMP synthase [glutamine-hydrolyzing] subunit A (188 aa).

A Glutamine amidotransferase type-1 domain is found at Met1 to Glu188. The Nucleophile role is filled by Cys76. Residues His163 and Glu165 contribute to the active site.

Heterodimer composed of a glutamine amidotransferase subunit (A) and a GMP-binding subunit (B).

It carries out the reaction XMP + L-glutamine + ATP + H2O = GMP + L-glutamate + AMP + diphosphate + 2 H(+). It functions in the pathway purine metabolism; GMP biosynthesis; GMP from XMP (L-Gln route): step 1/1. Its function is as follows. Catalyzes the synthesis of GMP from XMP. In Methanocaldococcus jannaschii (strain ATCC 43067 / DSM 2661 / JAL-1 / JCM 10045 / NBRC 100440) (Methanococcus jannaschii), this protein is GMP synthase [glutamine-hydrolyzing] subunit A.